The following is a 265-amino-acid chain: Protein HesA, vegetative (265 aa).

Belongs to the HesA/MoeB/ThiF family.

In Trichormus variabilis (strain ATCC 29413 / PCC 7937) (Anabaena variabilis), this protein is Protein HesA, vegetative (hesA2).